The sequence spans 315 residues: Methionyl-tRNA formyltransferase (315 aa).

A (6S)-5,6,7,8-tetrahydrofolate-binding site is contributed by S113–P116.

Belongs to the Fmt family.

It carries out the reaction L-methionyl-tRNA(fMet) + (6R)-10-formyltetrahydrofolate = N-formyl-L-methionyl-tRNA(fMet) + (6S)-5,6,7,8-tetrahydrofolate + H(+). Its function is as follows. Attaches a formyl group to the free amino group of methionyl-tRNA(fMet). The formyl group appears to play a dual role in the initiator identity of N-formylmethionyl-tRNA by promoting its recognition by IF2 and preventing the misappropriation of this tRNA by the elongation apparatus. This is Methionyl-tRNA formyltransferase from Escherichia coli O6:K15:H31 (strain 536 / UPEC).